The chain runs to 122 residues: Serum amyloid A-1 protein (122 aa).

The signal sequence occupies residues 1-18 (MKLLTGLVFCSLVLGVSS). Residues 19-45 (RSFFSFLGEAFDGARDMWRAYSDMREA) are important for amyloid formation; forms amyloid fibrils in vitro. The propeptide at 95–122 (LADQAANEWGRSGKDPNHFRPAGLPEKY) is often cleaved during amyloidogenesis. The disordered stretch occupies residues 98–122 (QAANEWGRSGKDPNHFRPAGLPEKY). At Asn-101 the chain carries N4,N4-dimethylasparagine.

It belongs to the SAA family. In terms of assembly, homohexamer; dimer of trimers. Can form amyloid fibrils after partial proteolysis; the native, undenatured protein does not form amyloid fibrils (in vitro). Apolipoprotein of the HDL complex. Binds to heparin. In terms of processing, this protein is the precursor of amyloid protein A, which is formed by the removal of approximately 24 residues from the C-terminal end. Expressed by the liver; secreted in plasma (at protein level).

It is found in the secreted. Its function is as follows. Major acute phase protein. The protein is Serum amyloid A-1 protein (SAA1) of Homo sapiens (Human).